Reading from the N-terminus, the 138-residue chain is ATP synthase epsilon chain (138 aa).

The protein belongs to the ATPase epsilon chain family. In terms of assembly, F-type ATPases have 2 components, CF(1) - the catalytic core - and CF(0) - the membrane proton channel. CF(1) has five subunits: alpha(3), beta(3), gamma(1), delta(1), epsilon(1). CF(0) has three main subunits: a, b and c.

It localises to the cell inner membrane. Its function is as follows. Produces ATP from ADP in the presence of a proton gradient across the membrane. The protein is ATP synthase epsilon chain of Verminephrobacter eiseniae (strain EF01-2).